A 655-amino-acid polypeptide reads, in one-letter code: DNA topoisomerase 4 subunit B (655 aa).

ATP contacts are provided by residues Y9, N49, D76, 116-122, and K340; that span reads GLHGVGA. A compositionally biased stretch (basic and acidic residues) spans 387–397; the sequence is AARKAREEARS. The segment at 387–419 is disordered; it reads AARKAREEARSGKKRKKSEATLSGKLTPAGSRN. One can recognise a Toprim domain in the interval 423 to 537; it reads NELYLVEGDS…HGKVFIALPP (115 aa). E429, D502, and D504 together coordinate Mg(2+).

This sequence belongs to the type II topoisomerase family. ParE type 2 subfamily. As to quaternary structure, heterotetramer composed of ParC and ParE. Mg(2+) serves as cofactor. Requires Mn(2+) as cofactor. The cofactor is Ca(2+).

The catalysed reaction is ATP-dependent breakage, passage and rejoining of double-stranded DNA.. Topoisomerase IV is essential for chromosome segregation. It relaxes supercoiled DNA. Performs the decatenation events required during the replication of a circular DNA molecule. The protein is DNA topoisomerase 4 subunit B of Bacillus subtilis (strain 168).